We begin with the raw amino-acid sequence, 223 residues long: Retbindin (223 aa).

The signal sequence occupies residues 1-30 (MANRGHTQPRALAWALGLTLVWILLGACGG). Intrachain disulfides connect C73–C143, C80–C120, C113–C157, and C126–C139.

This sequence belongs to the folate receptor family. Not N-glycosylated.

The protein resides in the secreted. Its subcellular location is the extracellular space. It localises to the extracellular matrix. It is found in the interphotoreceptor matrix. The protein localises to the cell membrane. Riboflavin-binding protein which might have a role in retinal flavin transport. In Canis lupus familiaris (Dog), this protein is Retbindin (RTBDN).